We begin with the raw amino-acid sequence, 389 residues long: MEGALAANWSAEAANASAAPPGAEGNRTAGPPRRNEALARVEVAVLCLILLLALSGNACVLLALRTTRQKHSRLFFFMKHLSIADLVVAVFQVLPQLLWDITFRFYGPDLLCRLVKYLQVVGMFASTYLLLLMSLDRCLAICQPLRSLRRRTDRLAVLATWLGCLVASAPQVHIFSLREVADGVFDCWAVFIQPWGPKAYITWITLAVYIVPVIVLAACYGLISFKIWQNLRLKTAAAAAAEAPEGAAAGDGGRVALARVSSVKLISKAKIRTVKMTFIIVLAFIVCWTPFFFVQMWSVWDANAPKEASAFIIVMLLASLNSCCNPWIYMLFTGHLFHELVQRFLCCSASYLKGRRLGETSASKKSNSSSFVLSHRSSSQRSCSQPSTA.

The Extracellular portion of the chain corresponds to 1–38; that stretch reads MEGALAANWSAEAANASAAPPGAEGNRTAGPPRRNEAL. Positions 7-26 are enriched in low complexity; it reads ANWSAEAANASAAPPGAEGN. The tract at residues 7 to 31 is disordered; it reads ANWSAEAANASAAPPGAEGNRTAGP. N-linked (GlcNAc...) asparagine glycosylation is found at asparagine 8, asparagine 15, and asparagine 26. A helical membrane pass occupies residues 39 to 63; it reads ARVEVAVLCLILLLALSGNACVLLA. The Cytoplasmic portion of the chain corresponds to 64-74; it reads LRTTRQKHSRL. A helical membrane pass occupies residues 75 to 97; it reads FFFMKHLSIADLVVAVFQVLPQL. At 98–113 the chain is on the extracellular side; sequence LWDITFRFYGPDLLCR. Cysteine 112 and cysteine 187 are disulfide-bonded. The helical transmembrane segment at 114–135 threads the bilayer; the sequence is LVKYLQVVGMFASTYLLLLMSL. Residues 136 to 154 lie on the Cytoplasmic side of the membrane; the sequence is DRCLAICQPLRSLRRRTDR. The chain crosses the membrane as a helical span at residues 155–175; it reads LAVLATWLGCLVASAPQVHIF. The Extracellular portion of the chain corresponds to 176 to 202; the sequence is SLREVADGVFDCWAVFIQPWGPKAYIT. The chain crosses the membrane as a helical span at residues 203–225; that stretch reads WITLAVYIVPVIVLAACYGLISF. Over 226-275 the chain is Cytoplasmic; the sequence is KIWQNLRLKTAAAAAAEAPEGAAAGDGGRVALARVSSVKLISKAKIRTVK. The helical transmembrane segment at 276-294 threads the bilayer; the sequence is MTFIIVLAFIVCWTPFFFV. Residues 295–309 are Extracellular-facing; that stretch reads QMWSVWDANAPKEAS. A helical membrane pass occupies residues 310–332; that stretch reads AFIIVMLLASLNSCCNPWIYMLF. Residues 333-389 are Cytoplasmic-facing; sequence TGHLFHELVQRFLCCSASYLKGRRLGETSASKKSNSSSFVLSHRSSSQRSCSQPSTA. Positions 361 to 389 are disordered; the sequence is SASKKSNSSSFVLSHRSSSQRSCSQPSTA. A phosphoserine mark is found at serine 366 and serine 368.

This sequence belongs to the G-protein coupled receptor 1 family. Vasopressin/oxytocin receptor subfamily.

It localises to the cell membrane. In terms of biological role, receptor for oxytocin. The activity of this receptor is mediated by G proteins which activate a phosphatidylinositol-calcium second messenger system. The protein is Oxytocin receptor (OXTR) of Homo sapiens (Human).